We begin with the raw amino-acid sequence, 275 residues long: 3-methyl-2-oxobutanoate hydroxymethyltransferase (275 aa).

2 residues coordinate Mg(2+): D44 and D83. 3-methyl-2-oxobutanoate contacts are provided by residues 44–45, D83, and K113; that span reads DS. E115 is a binding site for Mg(2+). The Proton acceptor role is filled by E182.

Belongs to the PanB family. Homodecamer; pentamer of dimers. The cofactor is Mg(2+).

It is found in the cytoplasm. It carries out the reaction 3-methyl-2-oxobutanoate + (6R)-5,10-methylene-5,6,7,8-tetrahydrofolate + H2O = 2-dehydropantoate + (6S)-5,6,7,8-tetrahydrofolate. It participates in cofactor biosynthesis; (R)-pantothenate biosynthesis; (R)-pantoate from 3-methyl-2-oxobutanoate: step 1/2. In terms of biological role, catalyzes the reversible reaction in which hydroxymethyl group from 5,10-methylenetetrahydrofolate is transferred onto alpha-ketoisovalerate to form ketopantoate. This chain is 3-methyl-2-oxobutanoate hydroxymethyltransferase, found in Enterococcus faecalis (strain ATCC 700802 / V583).